The chain runs to 154 residues: MLEESKALFLELYKEKKKNEWLDAWTDEVMSLVQQQYSNYKLDGILQEAARHDLLPVIENYITRGGNLHIVVLDECGEKVNILNVAAANNSVTVINYLLDNNIFNVDQRVSENSRTALHSAVKENAMESTKFLLKKEQILILNLNINISDLKVK.

2 ANK repeats span residues 78-108 (EKVN…NVDQ) and 113-142 (NSRT…ILIL).

The protein is Putative ankyrin repeat protein RBE_1220 of Rickettsia bellii (strain RML369-C).